The chain runs to 285 residues: Acetyl-coenzyme A carboxylase carboxyl transferase subunit beta (285 aa).

The CoA carboxyltransferase N-terminal domain maps to 33–285 (MWIKCSKCGK…TLGNILRMHS (253 aa)). Zn(2+) is bound by residues Cys-37, Cys-40, Cys-56, and Cys-59. A C4-type zinc finger spans residues 37-59 (CSKCGKILYKSDVDDNFKVCPKC).

Belongs to the AccD/PCCB family. Acetyl-CoA carboxylase is a heterohexamer composed of biotin carboxyl carrier protein (AccB), biotin carboxylase (AccC) and two subunits each of ACCase subunit alpha (AccA) and ACCase subunit beta (AccD). Requires Zn(2+) as cofactor.

Its subcellular location is the cytoplasm. It carries out the reaction N(6)-carboxybiotinyl-L-lysyl-[protein] + acetyl-CoA = N(6)-biotinyl-L-lysyl-[protein] + malonyl-CoA. It functions in the pathway lipid metabolism; malonyl-CoA biosynthesis; malonyl-CoA from acetyl-CoA: step 1/1. Its function is as follows. Component of the acetyl coenzyme A carboxylase (ACC) complex. Biotin carboxylase (BC) catalyzes the carboxylation of biotin on its carrier protein (BCCP) and then the CO(2) group is transferred by the transcarboxylase to acetyl-CoA to form malonyl-CoA. In Clostridium acetobutylicum (strain ATCC 824 / DSM 792 / JCM 1419 / IAM 19013 / LMG 5710 / NBRC 13948 / NRRL B-527 / VKM B-1787 / 2291 / W), this protein is Acetyl-coenzyme A carboxylase carboxyl transferase subunit beta.